The sequence spans 650 residues: A-kinase anchor protein 10, mitochondrial (650 aa).

Residues 1 to 16 (RALRPDPGPAMSFFRR) constitute a mitochondrion transit peptide. 2 disordered regions span residues 1 to 45 (RALR…QKST) and 168 to 192 (SSLA…ESLD). Residue serine 40 is modified to Phosphoserine. 2 consecutive RGS domains span residues 113 to 356 (TLEQ…CKYQ) and 366 to 493 (YLAD…YKYL). A Phosphoserine modification is found at serine 268. Residues 512-535 (LAAQGSGGPPDDPLPGASDPSASQ) are disordered. Positions 525–535 (LPGASDPSASQ) are enriched in low complexity. Positions 622 to 635 (LAWKIAKMIVSDVM) are PKA-RII subunit binding.

It is found in the mitochondrion. The protein localises to the membrane. It localises to the cytoplasm. Its function is as follows. Differentially targeted protein that binds to type I and II regulatory subunits of protein kinase A and anchors them to the mitochondria or the plasma membrane. Although the physiological relevance between PKA and AKAPS with mitochondria is not fully understood, one idea is that BAD, a proapoptotic member, is phosphorylated and inactivated by mitochondria-anchored PKA. It cannot be excluded too that it may facilitate PKA as well as G protein signal transduction, by acting as an adapter for assembling multiprotein complexes. With its RGS domain, it could lead to the interaction to G-alpha proteins, providing a link between the signaling machinery and the downstream kinase. This chain is A-kinase anchor protein 10, mitochondrial (AKAP10), found in Sus scrofa (Pig).